Reading from the N-terminus, the 151-residue chain is Large ribosomal subunit protein bL9 (151 aa).

Belongs to the bacterial ribosomal protein bL9 family.

Its function is as follows. Binds to the 23S rRNA. The polypeptide is Large ribosomal subunit protein bL9 (Mycobacteroides abscessus (strain ATCC 19977 / DSM 44196 / CCUG 20993 / CIP 104536 / JCM 13569 / NCTC 13031 / TMC 1543 / L948) (Mycobacterium abscessus)).